The sequence spans 269 residues: Thiazole synthase (269 aa).

Catalysis depends on Lys-112, which acts as the Schiff-base intermediate with DXP. 1-deoxy-D-xylulose 5-phosphate-binding positions include Gly-173, 199-200, and 221-222; these read AG and NT.

This sequence belongs to the ThiG family. Homotetramer. Forms heterodimers with either ThiH or ThiS.

The protein resides in the cytoplasm. It catalyses the reaction [ThiS sulfur-carrier protein]-C-terminal-Gly-aminoethanethioate + 2-iminoacetate + 1-deoxy-D-xylulose 5-phosphate = [ThiS sulfur-carrier protein]-C-terminal Gly-Gly + 2-[(2R,5Z)-2-carboxy-4-methylthiazol-5(2H)-ylidene]ethyl phosphate + 2 H2O + H(+). It functions in the pathway cofactor biosynthesis; thiamine diphosphate biosynthesis. Its function is as follows. Catalyzes the rearrangement of 1-deoxy-D-xylulose 5-phosphate (DXP) to produce the thiazole phosphate moiety of thiamine. Sulfur is provided by the thiocarboxylate moiety of the carrier protein ThiS. In vitro, sulfur can be provided by H(2)S. This chain is Thiazole synthase, found in Caulobacter vibrioides (strain ATCC 19089 / CIP 103742 / CB 15) (Caulobacter crescentus).